Consider the following 142-residue polypeptide: ATP synthase epsilon chain (142 aa).

Belongs to the ATPase epsilon chain family. As to quaternary structure, F-type ATPases have 2 components, CF(1) - the catalytic core - and CF(0) - the membrane proton channel. CF(1) has five subunits: alpha(3), beta(3), gamma(1), delta(1), epsilon(1). CF(0) has three main subunits: a, b and c.

It is found in the cell inner membrane. In terms of biological role, produces ATP from ADP in the presence of a proton gradient across the membrane. This chain is ATP synthase epsilon chain, found in Shewanella baltica (strain OS185).